The sequence spans 120 residues: Immunoglobulin kappa variable 2-29 (120 aa).

The signal sequence occupies residues 1–20 (MRLPAQLLGLLMLWIPGSSA). The framework-1 stretch occupies residues 21 to 43 (DIVMTQTPLSLSVTPGQPASISC). The Ig-like domain maps to 21 to 120 (DIVMTQTPLS…YYCMQGIHLP (100 aa)). Residues Cys-43 and Cys-113 are joined by a disulfide bond. The segment at 44–59 (KSSQSLLHSDGKTYLY) is complementarity-determining-1. A framework-2 region spans residues 60-74 (WYLQKPGQSPQLLIY). Residues 75-81 (EVSSRFS) are complementarity-determining-2. A framework-3 region spans residues 82–113 (GVPDRFSGSGSGTDFTLKISRVEAEDVGVYYC). Residues 114-120 (MQGIHLP) form a complementarity-determining-3 region.

Immunoglobulins are composed of two identical heavy chains and two identical light chains; disulfide-linked.

The protein localises to the secreted. The protein resides in the cell membrane. Functionally, v region of the variable domain of immunoglobulin light chains that participates in the antigen recognition. Immunoglobulins, also known as antibodies, are membrane-bound or secreted glycoproteins produced by B lymphocytes. In the recognition phase of humoral immunity, the membrane-bound immunoglobulins serve as receptors which, upon binding of a specific antigen, trigger the clonal expansion and differentiation of B lymphocytes into immunoglobulins-secreting plasma cells. Secreted immunoglobulins mediate the effector phase of humoral immunity, which results in the elimination of bound antigens. The antigen binding site is formed by the variable domain of one heavy chain, together with that of its associated light chain. Thus, each immunoglobulin has two antigen binding sites with remarkable affinity for a particular antigen. The variable domains are assembled by a process called V-(D)-J rearrangement and can then be subjected to somatic hypermutations which, after exposure to antigen and selection, allow affinity maturation for a particular antigen. In Homo sapiens (Human), this protein is Immunoglobulin kappa variable 2-29.